Consider the following 393-residue polypeptide: ATP phosphoribosyltransferase regulatory subunit (393 aa).

Belongs to the class-II aminoacyl-tRNA synthetase family. HisZ subfamily. Heteromultimer composed of HisG and HisZ subunits.

Its subcellular location is the cytoplasm. The protein operates within amino-acid biosynthesis; L-histidine biosynthesis; L-histidine from 5-phospho-alpha-D-ribose 1-diphosphate: step 1/9. Functionally, required for the first step of histidine biosynthesis. May allow the feedback regulation of ATP phosphoribosyltransferase activity by histidine. The sequence is that of ATP phosphoribosyltransferase regulatory subunit from Nitrosospira multiformis (strain ATCC 25196 / NCIMB 11849 / C 71).